A 177-amino-acid polypeptide reads, in one-letter code: MPNQVVEILSAEEIRRTLTRLASQVIEKTGDLSQLVLIGIYTRGVPLAHLLANQIEMLEKIKVAVGAIDVTFYRDDLDRIKTRTPAKTKIPFDLTGKTVVLVDDVIYKGRTVRAALNAVTEYGRPSVIRLLVLVDRGHRELPIHPDYTGKKLPTASEEQVKVYLQPVDGRDQVELLK.

Residues 99–111 (VVLVDDVIYKGRT) carry the PRPP-binding motif.

It belongs to the purine/pyrimidine phosphoribosyltransferase family. PyrR subfamily.

It carries out the reaction UMP + diphosphate = 5-phospho-alpha-D-ribose 1-diphosphate + uracil. Regulates the transcription of the pyrimidine nucleotide (pyr) operon in response to exogenous pyrimidines. Functionally, also displays a weak uracil phosphoribosyltransferase activity which is not physiologically significant. The chain is Bifunctional protein PyrR from Gloeothece citriformis (strain PCC 7424) (Cyanothece sp. (strain PCC 7424)).